Here is a 722-residue protein sequence, read N- to C-terminus: Ataxin-7-like protein 2 (722 aa).

Disordered regions lie at residues 106–228, 288–317, 347–403, and 531–600; these read LSKL…PPKT, NSRKGESPKEKSPGRKEQVLERPSQELPSS, SRAS…DCHY, and AITS…GCRG. The span at 181-191 shows a compositional bias: pro residues; it reads GKPPMAPPSKE. Residues 230–297 enclose the SCA7 domain; it reads RKMARKECDL…NSRKGESPKE (68 aa). Over residues 290–311 the composition is skewed to basic and acidic residues; sequence RKGESPKEKSPGRKEQVLERPS. Low complexity predominate over residues 541-556; sequence PSPSFSKLPPSKASKS. Positions 558-569 are enriched in basic and acidic residues; the sequence is KGKDGVEVEAPS. Ser-575 carries the post-translational modification Phosphoserine.

This is Ataxin-7-like protein 2 (ATXN7L2) from Homo sapiens (Human).